A 328-amino-acid chain; its full sequence is Beta-ketoacyl-[acyl-carrier-protein] synthase III (328 aa).

Active-site residues include Cys122 and His255. An ACP-binding region spans residues 256-260; it reads QANVR. Asn285 is an active-site residue.

It belongs to the thiolase-like superfamily. FabH family. Homodimer.

It localises to the cytoplasm. It catalyses the reaction malonyl-[ACP] + acetyl-CoA + H(+) = 3-oxobutanoyl-[ACP] + CO2 + CoA. It functions in the pathway lipid metabolism; fatty acid biosynthesis. Functionally, catalyzes the condensation reaction of fatty acid synthesis by the addition to an acyl acceptor of two carbons from malonyl-ACP. Catalyzes the first condensation reaction which initiates fatty acid synthesis and may therefore play a role in governing the total rate of fatty acid production. Possesses both acetoacetyl-ACP synthase and acetyl transacylase activities. Its substrate specificity determines the biosynthesis of branched-chain and/or straight-chain of fatty acids. The sequence is that of Beta-ketoacyl-[acyl-carrier-protein] synthase III from Bordetella pertussis (strain Tohama I / ATCC BAA-589 / NCTC 13251).